Reading from the N-terminus, the 88-residue chain is Small ribosomal subunit protein uS15 (88 aa).

Belongs to the universal ribosomal protein uS15 family. In terms of assembly, part of the 30S ribosomal subunit. Forms a bridge to the 50S subunit in the 70S ribosome, contacting the 23S rRNA.

Its function is as follows. One of the primary rRNA binding proteins, it binds directly to 16S rRNA where it helps nucleate assembly of the platform of the 30S subunit by binding and bridging several RNA helices of the 16S rRNA. Forms an intersubunit bridge (bridge B4) with the 23S rRNA of the 50S subunit in the ribosome. The chain is Small ribosomal subunit protein uS15 from Leptospira borgpetersenii serovar Hardjo-bovis (strain JB197).